The chain runs to 408 residues: Peptidase T (408 aa).

His78 contacts Zn(2+). Asp80 is an active-site residue. Asp141 contacts Zn(2+). Glu175 serves as the catalytic Proton acceptor. Residues Glu176, Asp198, and His380 each contribute to the Zn(2+) site.

This sequence belongs to the peptidase M20B family. The cofactor is Zn(2+).

The protein resides in the cytoplasm. The catalysed reaction is Release of the N-terminal residue from a tripeptide.. Cleaves the N-terminal amino acid of tripeptides. The chain is Peptidase T from Clostridium botulinum (strain 657 / Type Ba4).